Consider the following 473-residue polypeptide: Arginine biosynthesis bifunctional protein ArgJ, mitochondrial (473 aa).

Residues threonine 201, lysine 230, threonine 241, glutamate 328, asparagine 468, and threonine 473 each coordinate substrate. Threonine 241 (nucleophile) is an active-site residue.

Belongs to the ArgJ family. In terms of assembly, heterodimer of an alpha and a beta chain. In terms of processing, the alpha and beta chains are autoproteolytically processed from a single precursor protein within the mitochondrion.

Its subcellular location is the mitochondrion matrix. The enzyme catalyses N(2)-acetyl-L-ornithine + L-glutamate = N-acetyl-L-glutamate + L-ornithine. The catalysed reaction is L-glutamate + acetyl-CoA = N-acetyl-L-glutamate + CoA + H(+). It functions in the pathway amino-acid biosynthesis; L-arginine biosynthesis; L-ornithine and N-acetyl-L-glutamate from L-glutamate and N(2)-acetyl-L-ornithine (cyclic): step 1/1. Its pathway is amino-acid biosynthesis; L-arginine biosynthesis; N(2)-acetyl-L-ornithine from L-glutamate: step 1/4. Its function is as follows. Catalyzes two activities which are involved in the cyclic version of arginine biosynthesis: the synthesis of acetylglutamate from glutamate and acetyl-CoA, and of ornithine by transacetylation between acetylornithine and glutamate. This is Arginine biosynthesis bifunctional protein ArgJ, mitochondrial from Paracoccidioides lutzii (strain ATCC MYA-826 / Pb01) (Paracoccidioides brasiliensis).